The primary structure comprises 261 residues: Cytochrome c oxidase subunit 3 (261 aa).

Over 1-15 the chain is Mitochondrial matrix; the sequence is MTHQTHAYHMVNPSP. Residues 16-34 traverse the membrane as a helical segment; sequence WPLTGALSALLMTSGLIMW. Over 35–40 the chain is Mitochondrial intermembrane; it reads FHFNST. The helical transmembrane segment at 41–66 threads the bilayer; sequence TLLTLGLTTNMLTMYQWWRDVIREST. Topologically, residues 67 to 72 are mitochondrial matrix; sequence FQGHHT. A helical membrane pass occupies residues 73 to 105; sequence PTVQKGLRYGMILFIISEVLFFTGFFWAFYHSS. The Mitochondrial intermembrane segment spans residues 106-128; it reads LAPTPELGGCWPPTGIHPLNPLE. A helical membrane pass occupies residues 129–152; the sequence is VPLLNTSVLLASGVSITWAHHSLM. The Mitochondrial matrix portion of the chain corresponds to 153–155; sequence EGN. Residues 156-183 traverse the membrane as a helical segment; the sequence is RNPMLQALFITIALGIYFTLLQASEYYE. Residues 184-190 lie on the Mitochondrial intermembrane side of the membrane; that stretch reads APFTISD. The chain crosses the membrane as a helical span at residues 191–223; sequence GVYGSTFFVATGFHGLHVIIGSTFLIVCFFRQL. Over 224-232 the chain is Mitochondrial matrix; the sequence is KFHFTSNHH. The chain crosses the membrane as a helical span at residues 233–256; the sequence is FGFEAAAWYWHFVDVVWLFLYVSI. Topologically, residues 257-261 are mitochondrial intermembrane; the sequence is YWWGS.

This sequence belongs to the cytochrome c oxidase subunit 3 family. Component of the cytochrome c oxidase (complex IV, CIV), a multisubunit enzyme composed of 14 subunits. The complex is composed of a catalytic core of 3 subunits MT-CO1, MT-CO2 and MT-CO3, encoded in the mitochondrial DNA, and 11 supernumerary subunits COX4I, COX5A, COX5B, COX6A, COX6B, COX6C, COX7A, COX7B, COX7C, COX8 and NDUFA4, which are encoded in the nuclear genome. The complex exists as a monomer or a dimer and forms supercomplexes (SCs) in the inner mitochondrial membrane with NADH-ubiquinone oxidoreductase (complex I, CI) and ubiquinol-cytochrome c oxidoreductase (cytochrome b-c1 complex, complex III, CIII), resulting in different assemblies (supercomplex SCI(1)III(2)IV(1) and megacomplex MCI(2)III(2)IV(2)).

It is found in the mitochondrion inner membrane. The enzyme catalyses 4 Fe(II)-[cytochrome c] + O2 + 8 H(+)(in) = 4 Fe(III)-[cytochrome c] + 2 H2O + 4 H(+)(out). In terms of biological role, component of the cytochrome c oxidase, the last enzyme in the mitochondrial electron transport chain which drives oxidative phosphorylation. The respiratory chain contains 3 multisubunit complexes succinate dehydrogenase (complex II, CII), ubiquinol-cytochrome c oxidoreductase (cytochrome b-c1 complex, complex III, CIII) and cytochrome c oxidase (complex IV, CIV), that cooperate to transfer electrons derived from NADH and succinate to molecular oxygen, creating an electrochemical gradient over the inner membrane that drives transmembrane transport and the ATP synthase. Cytochrome c oxidase is the component of the respiratory chain that catalyzes the reduction of oxygen to water. Electrons originating from reduced cytochrome c in the intermembrane space (IMS) are transferred via the dinuclear copper A center (CU(A)) of subunit 2 and heme A of subunit 1 to the active site in subunit 1, a binuclear center (BNC) formed by heme A3 and copper B (CU(B)). The BNC reduces molecular oxygen to 2 water molecules using 4 electrons from cytochrome c in the IMS and 4 protons from the mitochondrial matrix. This is Cytochrome c oxidase subunit 3 (MT-CO3) from Madoqua guentheri (Guenther's dik-dik).